Reading from the N-terminus, the 348-residue chain is Actin maturation protease (348 aa).

A compositionally biased stretch (pro residues) spans 1–18; it reads MISPCSPPLEPPVPPPET. Positions 1-64 are disordered; the sequence is MISPCSPPLE…LPPPPRTTGF (64 aa). Over residues 34–48 the composition is skewed to low complexity; sequence NLPELAFPPSSFQAS. Pro residues predominate over residues 49-60; it reads VPPPPPLPPPPR. The peptidase C39-like stretch occupies residues 121-241; sequence SLIQEGPQCG…WAVSAGVLLG (121 aa). Residue C129 is part of the active site. S313 is subject to Phosphoserine.

Belongs to the ACTMAP family. Interacts (via N-terminus) with PFN2; the interaction may facilitate efficient cleavage of the acetylated N-terminus of immature actin. Interacts with PFN1.

It is found in the cytoplasm. It carries out the reaction N-terminal N(alpha)-acetyl-L-methionyl-L-aspartyl-[protein] + H2O = N-terminal L-aspartyl-[protein] + N-acetyl-L-methionine. The enzyme catalyses N-terminal N(alpha)-acetyl-L-methionyl-L-glutamyl-[protein] + H2O = N-terminal L-glutamyl-[protein] + N-acetyl-L-methionine. It catalyses the reaction N-terminal N(alpha)-acetyl-L-cysteinyl-L-aspartyl-[protein] + H2O = N-terminal L-aspartyl-[protein] + N-acetyl-L-cysteine. The catalysed reaction is N-terminal N(alpha)-acetyl-L-cysteinyl-L-glutamyl-[protein] + H2O = N-terminal L-glutamyl-[protein] + N-acetyl-L-cysteine. Functionally, actin maturation protease that specifically mediates the cleavage of immature acetylated N-terminal actin, thereby contributing to actin maturation. Cleaves N-terminal acetylated methionine of immature cytoplasmic beta- and gamma-actins ACTB and ACTG1 after translation. Cleaves N-terminal acetylated cysteine of muscle alpha-actins ACTA1, ACTC1 and ACTA2 after canonical removal of N-terminal methionine. The sequence is that of Actin maturation protease from Bos taurus (Bovine).